The chain runs to 340 residues: Pre-rRNA-processing protein esf-2 (340 aa).

2 stretches are compositionally biased toward basic and acidic residues: residues 1-12 (MPEDDVRNKFLD) and 19-32 (DAGH…DFQK). Residues 1–103 (MPEDDVRNKF…KSVLASDLPG (103 aa)) form a disordered region. Over residues 44–64 (DDEDSEADDFTDAEEEHDQDD) the composition is skewed to acidic residues. Residues 65–95 (AESKDAPAKDGQETTDGKEKKDGKKEKEKKS) show a composition bias toward basic and acidic residues. The 91-residue stretch at 124-214 (GVVYISRVPP…KKGSYYRDDI (91 aa)) folds into the RRM domain. Residues 272-329 (AKKASKGSKAGGEGAAQVTESTIPSAAATTTTTTNDDKRRTFKQIPLAKKRKLDETQP) are disordered.

The protein belongs to the ESF2/ABP1 family.

It is found in the nucleus. It localises to the nucleolus. Its function is as follows. Involved in the small subunit (SSU) processome assembly and function, and in the 18S rRNA synthesis. Required for the early cleavages at sites A0, A1 and A2. The sequence is that of Pre-rRNA-processing protein esf-2 (esf-2) from Neurospora crassa (strain ATCC 24698 / 74-OR23-1A / CBS 708.71 / DSM 1257 / FGSC 987).